The sequence spans 268 residues: Orotidine 5'-phosphate decarboxylase (268 aa).

Substrate is bound by residues D39, 61 to 63 (KTH), 93 to 102 (DRKFADIGNT), Y219, and R237. K95 serves as the catalytic Proton donor.

This sequence belongs to the OMP decarboxylase family.

It carries out the reaction orotidine 5'-phosphate + H(+) = UMP + CO2. It participates in pyrimidine metabolism; UMP biosynthesis via de novo pathway; UMP from orotate: step 2/2. The chain is Orotidine 5'-phosphate decarboxylase (URA3) from Pachysolen tannophilus (Yeast).